The primary structure comprises 246 residues: Acetylglutamate kinase (246 aa).

Substrate contacts are provided by residues 30–31 (GG), Arg52, and Asn151.

It belongs to the acetylglutamate kinase family. ArgB subfamily.

The protein resides in the cytoplasm. The catalysed reaction is N-acetyl-L-glutamate + ATP = N-acetyl-L-glutamyl 5-phosphate + ADP. Its pathway is amino-acid biosynthesis; L-arginine biosynthesis; N(2)-acetyl-L-ornithine from L-glutamate: step 2/4. In terms of biological role, catalyzes the ATP-dependent phosphorylation of N-acetyl-L-glutamate. This chain is Acetylglutamate kinase, found in Methanopyrus kandleri (strain AV19 / DSM 6324 / JCM 9639 / NBRC 100938).